A 453-amino-acid chain; its full sequence is Allantoinase (453 aa).

His-59, His-61, Lys-146, His-186, His-242, and Asp-315 together coordinate Zn(2+). An N6-carboxylysine modification is found at Lys-146.

Belongs to the metallo-dependent hydrolases superfamily. Allantoinase family. As to quaternary structure, homotetramer. Requires Zn(2+) as cofactor. In terms of processing, carboxylation allows a single lysine to coordinate two zinc ions.

The catalysed reaction is (S)-allantoin + H2O = allantoate + H(+). The protein operates within nitrogen metabolism; (S)-allantoin degradation; allantoate from (S)-allantoin: step 1/1. Catalyzes the conversion of allantoin (5-ureidohydantoin) to allantoic acid by hydrolytic cleavage of the five-member hydantoin ring. The chain is Allantoinase from Salmonella paratyphi B (strain ATCC BAA-1250 / SPB7).